The primary structure comprises 378 residues: TelA-like protein SAUSA300_1299 (378 aa).

It belongs to the TelA family.

The protein is TelA-like protein SAUSA300_1299 of Staphylococcus aureus (strain USA300).